A 497-amino-acid polypeptide reads, in one-letter code: MFAKATRSFLREVDAEGDLIAVSNLNDSDKSQLLSLVTKKKRFWCWQRPKYQFLSVTLGDVLTEAQCLSPVVVESDFVKYEGKFENHVSGTIETALGKVKLNFGDKGLRESQSSFGTLRKQEVDLQQLIRDSVERTINLKNPVLQQMLESKNEVLCILTQKIVTTQKCVISEHIQTEEKCGGMVGIKTKTVQVSVTKDENIIKDASVALEIPAPTTIAYSVIELYVKLDGQFEFCLLRGKHGGFEHQRRSDIVFPDAGALQDFPFWDVPDAGQGLPTPDGPLSVLKQGTRLLEKNFFPFVELPEQHRTALNTVLQAVLSDEELLAVLEQVCDDLVHSLSPPLAMLGELKPPHRQDLTAFLRLVGYRVQGGCPCLEDGVGSQKLFSTAYFLVSALAEMPDNAAALLGTCCKLQIIPALCHLLHAMSHDGVCDLEDPALAPLKDTERFGVAQRLFASADINLERVQSSVKAVTPLKDPSVLPLILYISLKGLCALGREH.

A membrane targeting domain region spans residues 1–56; the sequence is MFAKATRSFLREVDAEGDLIAVSNLNDSDKSQLLSLVTKKKRFWCWQRPKYQFLSV. Cys45 carries the post-translational modification S-(2-succinyl)cysteine. Lys120 is covalently cross-linked (Glycyl lysine isopeptide (Lys-Gly) (interchain with G-Cter in ubiquitin)). Residues Cys156, Cys168, and Cys180 each carry the S-(2-succinyl)cysteine modification. A Glycyl lysine isopeptide (Lys-Gly) (interchain with G-Cter in ubiquitin) cross-link involves residue Lys189. Cys235, Cys371, Cys409, Cys418, and Cys491 each carry S-(2-succinyl)cysteine.

The protein belongs to the gasdermin family. As to quaternary structure, homooligomer; homooligomeric ring-shaped pore complex containing 27-28 subunits when inserted in the membrane. In terms of processing, cleavage at Asp-270 by CASP3 (mature and uncleaved precursor forms) or granzyme B (GZMB) relieves autoinhibition and is sufficient to initiate pyroptosis. Post-translationally, succination by the Krebs cycle intermediate fumarate, which leads to S-(2-succinyl)cysteine residues, inhibits processing by caspases, and ability to initiate pyroptosis. Succination modification is catalyzed by a non-enzymatic reaction caused by an accumulation of fumarate. Ubiquitinated on Lys-120 and Lys-189 via 'Lys-48'-linked polyubiquitin chains, leading to proteasomal degradation. Deubiquitinated by USP48, leading to increased stability. In terms of processing, palmitoylated.

It is found in the cell membrane. The protein localises to the cytoplasm. The protein resides in the cytosol. The full-length protein before cleavage is inactive: intramolecular interactions between N- and C-terminal domains mediate autoinhibition in the absence of activation signal. The intrinsic pyroptosis-inducing activity is carried by the released N-terminal moiety (Gasdermin-E, N-terminal) following cleavage by CASP3 or granzyme B (GZMB). Activated by NLRP1 in the absence of GSDMD expression: NLRP1 cleaves and activates CASP8, promoting downstream activation of CASP3 and subsequent activation of GSDME. Precursor of a pore-forming protein that converts non-inflammatory apoptosis to pyroptosis. This form constitutes the precursor of the pore-forming protein: upon cleavage, the released N-terminal moiety (Gasdermin-E, N-terminal) binds to membranes and forms pores, triggering pyroptosis. Functionally, pore-forming protein produced by cleavage by CASP3 or granzyme B (GZMB), which converts non-inflammatory apoptosis to pyroptosis or promotes granzyme-mediated pyroptosis, respectively. After cleavage, moves to the plasma membrane, homooligomerizes within the membrane and forms pores of 10-15 nanometers (nm) of inner diameter, allowing the release of mature interleukins (IL1B and IL16) and triggering pyroptosis. Binds to inner leaflet lipids, bisphosphorylated phosphatidylinositols, such as phosphatidylinositol (4,5)-bisphosphate. Cleavage by CASP3 switches CASP3-mediated apoptosis induced by TNF or danger signals, such as chemotherapy drugs, to pyroptosis. Mediates secondary necrosis downstream of the mitochondrial apoptotic pathway and CASP3 activation as well as in response to viral agents. Exhibits bactericidal activity. Cleavage by GZMB promotes tumor suppressor activity by triggering robust anti-tumor immunity. Suppresses tumors by mediating granzyme-mediated pyroptosis in target cells of natural killer (NK) cells: cleavage by granzyme B (GZMB), delivered to target cells from NK-cells, triggers pyroptosis of tumor cells and tumor suppression. May play a role in the p53/TP53-regulated cellular response to DNA damage. The chain is Gasdermin-E from Equus caballus (Horse).